The following is a 1081-amino-acid chain: Disheveled-associated activator of morphogenesis 1-A (1081 aa).

The region spanning 45–418 is the GBD/FH3 domain; it reads LPVPPVEELD…QIVIQNEKGQ (374 aa). Disordered regions lie at residues 455-476 and 519-615; these read KEHNELQQKLEKKERECDAKTQ and RTVC…PLKS. Residues 526–536 are compositionally biased toward pro residues; it reads PGGPPPPPGAP. Positions 538–547 are enriched in low complexity; sequence GPMSMPSGNF. A compositionally biased stretch (pro residues) spans 548 to 585; it reads MPPPPPPPPPFPGGMAPPPPPPPPPPPPPGGPPPPPGL. The span at 586-600 shows a compositional bias: low complexity; it reads PLLGAAPPGAPLGLS. The FH2 domain maps to 603 to 1012; sequence KKNIPQPKNP…EERRIRMEAQ (410 aa). Positions 696–705 are actin-binding; sequence AQNCNILLSR. Residues 1013–1029 are compositionally biased toward basic and acidic residues; sequence LKEQRERERKARKAKEN. Disordered regions lie at residues 1013 to 1038 and 1060 to 1081; these read LKEQRERERKARKAKENGEEEGEFDD and RKRIVSQTTESSRERPVTKLNY. Residues 1030-1061 form the DAD domain; sequence GEEEGEFDDLVSALRSGEVFDKDLSKLKRNRK. The segment covering 1070–1081 has biased composition (basic and acidic residues); that stretch reads SSRERPVTKLNY.

Its subcellular location is the cytoplasm. The protein resides in the cytoskeleton. It localises to the cilium basal body. Binds to disheveled (dsh) and Rho, and mediates Wnt-induced dsh-Rho complex formation during gastrulation. May play a role as a scaffolding protein to recruit Rho-GDP and Rho-GEF, thereby enhancing Rho-GTP formation. Can direct nucleation and elongation of new actin filaments. Involved in building functional cilia. Involved in building functional cilia. Involved in the organization of the subapical actin network in multiciliated epithelial cells. The sequence is that of Disheveled-associated activator of morphogenesis 1-A (daam1-a) from Xenopus laevis (African clawed frog).